A 299-amino-acid chain; its full sequence is Zinc finger protein-like 1 homolog (299 aa).

The B box-type; degenerate zinc-finger motif lies at 1–43 (MGLCKCPKRLVTNQFCFEHRVNVCEHCMVQSHPKCIVQSYLQW). The RING-type; atypical zinc-finger motif lies at 53-101 (CTLCGTTLEQGDCVRLVCYHVFHWDCLNARQAALPANTAPRGHQCPACS). A disordered region spans residues 200–231 (AGDYASSRRPLLPRQSPIGGTDRDDNKYQRRT). The residue at position 215 (Ser-215) is a Phosphoserine. Residues 256–276 (WFLVTAGILAFVLFVYLMAWL) traverse the membrane as a helical segment.

This sequence belongs to the ZFPL1 family.

Its subcellular location is the membrane. The protein is Zinc finger protein-like 1 homolog of Drosophila melanogaster (Fruit fly).